A 428-amino-acid chain; its full sequence is Histone deacetylase 3 (428 aa).

Residues 3 to 316 are histone deacetylase; sequence KTVAYFYDPD…WTYETSLLVE (314 aa). Positions 17, 21, and 25 each coordinate 1D-myo-inositol 1,4,5,6-tetrakisphosphate. The active site involves His135. Positions 170, 172, and 259 each coordinate Zn(2+). Arg265 is a 1D-myo-inositol 1,4,5,6-tetrakisphosphate binding site. Basic and acidic residues-rich tracts occupy residues 388-405 and 415-428; these read DRTD…ENYS and DGDH…DVEI. Residues 388 to 428 are disordered; that stretch reads DRTDEADAEERGPEENYSRPEAPNEFYDGDHDNDKESDVEI. Ser424 is modified (phosphoserine).

Belongs to the histone deacetylase family. HD type 1 subfamily. In terms of assembly, interacts with HDAC7 and HDAC9. Interacts with DAXX, KDM4A, HDAC10 and DACH1. Found in a complex with NCOR1 and NCOR2. Component of the N-Cor repressor complex, at least composed of NCOR1, NCOR2, HDAC3, TBL1X, TBL1R, CORO2A and GPS2. Interacts with BCOR, MJD2A/JHDM3A, NRIP1, PRDM6 and SRY. Interacts with BTBD14B. Interacts with GLIS2. Interacts (via the DNA-binding domain) with NR2C1; the interaction recruits phosphorylated NR2C1 to PML bodies for sumoylation. Component of the Notch corepressor complex. Interacts with CBFA2T3 and NKAP. Interacts with APEX1; the interaction is not dependent on the acetylated status of APEX1. Interacts with ZMYND15. Interacts with SMRT/NCOR2 and BCL6 on DNA enhancer elements. Interacts with INSM1. Interacts with XBP1 isoform 1; the interaction occurs in endothelial cell (EC) under disturbed flow. Interacts (via C-terminus) with CCAR2 (via N-terminus). Interacts with and deacetylates MEF2D. Interacts with BEND3. Interacts with NKAPL. Interacts with DHX36; this interaction occurs in a RNA-dependent manner. Interacts weakly with CRY1; this interaction is enhanced in the presence of FBXL3. Interacts with FBXL3 and BMAL1. Interacts with NCOR1. Interacts with RARA. Interacts with SETD5. In terms of processing, sumoylated in vitro. Deubiquitinated on 'Lys-63'-linked ubiquitin chains by USP38; leading to a decreased level of histone acetylation.

The protein localises to the nucleus. The protein resides in the chromosome. Its subcellular location is the cytoplasm. It localises to the cytosol. The catalysed reaction is N(6)-acetyl-L-lysyl-[histone] + H2O = L-lysyl-[histone] + acetate. The enzyme catalyses N(6)-acetyl-L-lysyl-[protein] + H2O = L-lysyl-[protein] + acetate. It catalyses the reaction N(6)-(2E)-butenoyl-L-lysyl-[protein] + H2O = (2E)-2-butenoate + L-lysyl-[protein]. It carries out the reaction N(6)-(2-hydroxyisobutanoyl)-L-lysyl-[protein] + H2O = 2-hydroxy-2-methylpropanoate + L-lysyl-[protein]. The catalysed reaction is N(6)-[(S)-lactoyl]-L-lysyl-[protein] + H2O = (S)-lactate + L-lysyl-[protein]. Inositol tetraphosphate (1D-myo-inositol 1,4,5,6-tetrakisphosphate) promotes the histone deacetylase activity by acting as an intermolecular glue between HDAC3 and NCOR2, thereby promoting its association with the N-Cor complex, a prerequisite for the histone deacetylase activity. Its function is as follows. Histone deacetylase that catalyzes the deacetylation of lysine residues on the N-terminal part of the core histones (H2A, H2B, H3 and H4), and some other non-histone substrates. Histone deacetylation gives a tag for epigenetic repression and plays an important role in transcriptional regulation, cell cycle progression and developmental events. Histone deacetylases act via the formation of large multiprotein complexes, such as N-Cor repressor complex, which activate the histone deacetylase activity. Participates in the BCL6 transcriptional repressor activity by deacetylating the H3 'Lys-27' (H3K27) on enhancer elements, antagonizing EP300 acetyltransferase activity and repressing proximal gene expression. Acts as a molecular chaperone for shuttling phosphorylated NR2C1 to PML bodies for sumoylation. Contributes, together with XBP1 isoform 1, to the activation of NFE2L2-mediated HMOX1 transcription factor gene expression in a PI(3)K/mTORC2/Akt-dependent signaling pathway leading to endothelial cell (EC) survival under disturbed flow/oxidative stress. Regulates both the transcriptional activation and repression phases of the circadian clock in a deacetylase activity-independent manner. During the activation phase, promotes the accumulation of ubiquitinated BMAL1 at the E-boxes and during the repression phase, blocks FBXL3-mediated CRY1/2 ubiquitination and promotes the interaction of CRY1 and BMAL1. The NCOR1-HDAC3 complex regulates the circadian expression of the core clock gene BMAL1 and the genes involved in lipid metabolism in the liver. Also functions as deacetylase for non-histone targets, such as KAT5, MEF2D, MAPK14, RARA and STAT3. Serves as a corepressor of RARA, mediating its deacetylation and repression, leading to inhibition of RARE DNA element binding. In addition to protein deacetylase activity, also acts as a protein-lysine deacylase by recognizing other acyl groups: catalyzes removal of (2E)-butenoyl (crotonyl), lactoyl (lactyl) and 2-hydroxyisobutanoyl (2-hydroxyisobutyryl) acyl groups from lysine residues, leading to protein decrotonylation, delactylation and de-2-hydroxyisobutyrylation, respectively. Catalyzes decrotonylation of MAPRE1/EB1. Mediates delactylation NBN/NBS1, thereby inhibiting DNA double-strand breaks (DSBs) via homologous recombination (HR). The protein is Histone deacetylase 3 of Mus musculus (Mouse).